The chain runs to 537 residues: Probable glucomannan 4-beta-mannosyltransferase 15 (537 aa).

Residues 50–70 (FIVPLFKCIVVMCLIISLLVF) form a helical membrane-spanning segment. Aspartate 150 is an active-site residue. Residues aspartate 209 and aspartate 211 each contribute to the substrate site. Residue aspartate 303 is part of the active site. 4 helical membrane-spanning segments follow: residues 382–402 (IVVH…SVFL), 418–438 (VITL…IFWV), 494–514 (EMMM…FGNA), and 515–535 (FLYL…VGFV).

Belongs to the glycosyltransferase 2 family. Plant cellulose synthase-like A subfamily.

The protein resides in the golgi apparatus membrane. It carries out the reaction GDP-mannose + (glucomannan)n = GDP + (glucomannan)n+1.. In terms of biological role, probable mannan synthase which consists of a 4-beta-mannosyltransferase activity on mannan using GDP-mannose. The beta-1,4-mannan product is the backbone for galactomannan synthesis by galactomannan galactosyltransferase. Galactomannan is a noncellulosic polysaccharides of plant cell wall. The protein is Probable glucomannan 4-beta-mannosyltransferase 15 of Arabidopsis thaliana (Mouse-ear cress).